Here is a 411-residue protein sequence, read N- to C-terminus: Bifunctional protein GlmU (411 aa).

A pyrophosphorylase region spans residues 1 to 204 (MDAIILCAGK…IGKLHGVELN (204 aa)). Residues 6 to 9 (LCAG), Q74, and G79 contribute to the UTP site. N-acetyl-alpha-D-glucosamine 1-phosphate is bound by residues T80, G130, N142, and N158. The linker stretch occupies residues 205-224 (GYWNDIGHPWDVLSANSHFL). The segment at 225–411 (NKIISKISGK…DELVITKKRN (187 aa)) is N-acetyltransferase. Residue H308 is the Proton acceptor of the active site. Residues A384 and K401 each coordinate acetyl-CoA.

This sequence in the N-terminal section; belongs to the N-acetylglucosamine-1-phosphate uridyltransferase family. In the C-terminal section; belongs to the transferase hexapeptide repeat family.

It carries out the reaction N-acetyl-alpha-D-glucosamine 1-phosphate + UTP + H(+) = UDP-N-acetyl-alpha-D-glucosamine + diphosphate. The catalysed reaction is alpha-D-glucosamine 1-phosphate + acetyl-CoA = N-acetyl-alpha-D-glucosamine 1-phosphate + CoA + H(+). It participates in nucleotide-sugar biosynthesis; UDP-N-acetyl-alpha-D-glucosamine biosynthesis; N-acetyl-alpha-D-glucosamine 1-phosphate from alpha-D-glucosamine 6-phosphate (route II): step 2/2. Its pathway is nucleotide-sugar biosynthesis; UDP-N-acetyl-alpha-D-glucosamine biosynthesis; UDP-N-acetyl-alpha-D-glucosamine from N-acetyl-alpha-D-glucosamine 1-phosphate: step 1/1. Catalyzes the last two sequential reactions in the de novo biosynthetic pathway for UDP-N-acetyl-glucosamine (UDP-GlcNAc). Responsible for the acetylation of GlcN-1-P to GlcNAc-1-P, and for the uridyl transfer from UTP to GlcNAc-1-P, to produce UDP-GlcNAc and pyrophosphate. The sequence is that of Bifunctional protein GlmU from Methanococcus maripaludis (strain C5 / ATCC BAA-1333).